A 726-amino-acid chain; its full sequence is uncharacterized protein (726 aa).

Catalysis depends on charge relay system residues Ser-583 and His-698.

This sequence belongs to the peptidase S9B family.

This is an uncharacterized protein from Sinorhizobium fredii (strain NBRC 101917 / NGR234).